Consider the following 147-residue polypeptide: Peptide methionine sulfoxide reductase MsrB (147 aa).

Residues 1-11 show a composition bias toward basic and acidic residues; it reads MPKIVKKEPKF. The interval 1–25 is disordered; it reads MPKIVKKEPKFVEQSGKKVTKSDEQ. The region spanning 23–145 is the MsrB domain; the sequence is DEQWREQLSD…NSVSLIFNKS (123 aa). Zn(2+) is bound by residues cysteine 62, cysteine 65, cysteine 111, and cysteine 114. Residue cysteine 134 is the Nucleophile of the active site.

It belongs to the MsrB Met sulfoxide reductase family. Zn(2+) serves as cofactor.

The catalysed reaction is L-methionyl-[protein] + [thioredoxin]-disulfide + H2O = L-methionyl-(R)-S-oxide-[protein] + [thioredoxin]-dithiol. This chain is Peptide methionine sulfoxide reductase MsrB, found in Vibrio parahaemolyticus serotype O3:K6 (strain RIMD 2210633).